The primary structure comprises 793 residues: Outer membrane protein assembly factor BamA (793 aa).

Positions 1-19 are cleaved as a signal peptide; sequence MKKLLIASLLFGTTTTVFA. 5 consecutive POTRA domains span residues 22 to 89, 90 to 170, 173 to 259, 262 to 341, and 344 to 418; these read FVAK…VVAK, SIIS…INED, AKLA…VNEG, YDLR…VDAG, and LTVR…VKER.

It belongs to the BamA family. Part of the Bam complex.

Its subcellular location is the cell outer membrane. Part of the outer membrane protein assembly complex, which is involved in assembly and insertion of beta-barrel proteins into the outer membrane. This chain is Outer membrane protein assembly factor BamA, found in Haemophilus influenzae.